A 515-amino-acid chain; its full sequence is Maturase K (515 aa).

Belongs to the intron maturase 2 family. MatK subfamily.

It localises to the plastid. The protein resides in the chloroplast. Its function is as follows. Usually encoded in the trnK tRNA gene intron. Probably assists in splicing its own and other chloroplast group II introns. This chain is Maturase K, found in Picea sitchensis (Sitka spruce).